Here is a 427-residue protein sequence, read N- to C-terminus: 3-phosphoshikimate 1-carboxyvinyltransferase (427 aa).

Residues lysine 27, serine 28, and arginine 32 each coordinate 3-phosphoshikimate. Position 27 (lysine 27) interacts with phosphoenolpyruvate. The phosphoenolpyruvate site is built by glycine 95 and arginine 123. The 3-phosphoshikimate site is built by serine 166, serine 167, glutamine 168, serine 192, aspartate 305, and lysine 332. Position 168 (glutamine 168) interacts with phosphoenolpyruvate. Aspartate 305 functions as the Proton acceptor in the catalytic mechanism. Phosphoenolpyruvate contacts are provided by arginine 336 and arginine 377.

Belongs to the EPSP synthase family. As to quaternary structure, monomer.

Its subcellular location is the cytoplasm. It carries out the reaction 3-phosphoshikimate + phosphoenolpyruvate = 5-O-(1-carboxyvinyl)-3-phosphoshikimate + phosphate. It participates in metabolic intermediate biosynthesis; chorismate biosynthesis. Its function is as follows. Catalyzes the transfer of the enolpyruvyl moiety of phosphoenolpyruvate (PEP) to the 5-hydroxyl of shikimate-3-phosphate (S3P) to produce enolpyruvyl shikimate-3-phosphate and inorganic phosphate. This Aeropyrum pernix (strain ATCC 700893 / DSM 11879 / JCM 9820 / NBRC 100138 / K1) protein is 3-phosphoshikimate 1-carboxyvinyltransferase.